The primary structure comprises 365 residues: Holliday junction branch migration complex subunit RuvB (365 aa).

A compositionally biased stretch (polar residues) spans 1 to 10 (MAIVSSNAAS). A disordered region spans residues 1–48 (MAIVSSNAASQRPRPDRGPDRVPNRVVDGARQAEDDRDPGRVGAKEDS). Composition is skewed to basic and acidic residues over residues 13–23 (PRPDRGPDRVP) and 31–48 (RQAE…KEDS). The large ATPase domain (RuvB-L) stretch occupies residues 13-210 (PRPDRGPDRV…FGLIQRLEFY (198 aa)). 9 residues coordinate ATP: Leu49, Arg50, Gly91, Lys94, Thr95, Thr96, Arg200, Tyr210, and Arg247. Thr95 provides a ligand contact to Mg(2+). The segment at 211-282 (GLEDLQAIVE…LVDEALTLHR (72 aa)) is small ATPAse domain (RuvB-S). The head domain (RuvB-H) stretch occupies residues 285-365 (GRGLDASDRR…GWPYPQEQAA (81 aa)). Residues Arg340 and Arg345 each coordinate DNA.

It belongs to the RuvB family. Homohexamer. Forms an RuvA(8)-RuvB(12)-Holliday junction (HJ) complex. HJ DNA is sandwiched between 2 RuvA tetramers; dsDNA enters through RuvA and exits via RuvB. An RuvB hexamer assembles on each DNA strand where it exits the tetramer. Each RuvB hexamer is contacted by two RuvA subunits (via domain III) on 2 adjacent RuvB subunits; this complex drives branch migration. In the full resolvosome a probable DNA-RuvA(4)-RuvB(12)-RuvC(2) complex forms which resolves the HJ.

It localises to the cytoplasm. The catalysed reaction is ATP + H2O = ADP + phosphate + H(+). The RuvA-RuvB-RuvC complex processes Holliday junction (HJ) DNA during genetic recombination and DNA repair, while the RuvA-RuvB complex plays an important role in the rescue of blocked DNA replication forks via replication fork reversal (RFR). RuvA specifically binds to HJ cruciform DNA, conferring on it an open structure. The RuvB hexamer acts as an ATP-dependent pump, pulling dsDNA into and through the RuvAB complex. RuvB forms 2 homohexamers on either side of HJ DNA bound by 1 or 2 RuvA tetramers; 4 subunits per hexamer contact DNA at a time. Coordinated motions by a converter formed by DNA-disengaged RuvB subunits stimulates ATP hydrolysis and nucleotide exchange. Immobilization of the converter enables RuvB to convert the ATP-contained energy into a lever motion, pulling 2 nucleotides of DNA out of the RuvA tetramer per ATP hydrolyzed, thus driving DNA branch migration. The RuvB motors rotate together with the DNA substrate, which together with the progressing nucleotide cycle form the mechanistic basis for DNA recombination by continuous HJ branch migration. Branch migration allows RuvC to scan DNA until it finds its consensus sequence, where it cleaves and resolves cruciform DNA. The polypeptide is Holliday junction branch migration complex subunit RuvB (Synechococcus sp. (strain WH7803)).